The sequence spans 483 residues: Membrane-bound lytic murein transglycosylase F (483 aa).

Residues 1-18 form the signal peptide; sequence MKGLIARFIAGFALLLWA. The interval 19–267 is non-LT domain; sequence WDMVFPWQQL…RIEEKYFNHL (249 aa). Positions 269-483 are LT domain; that stretch reads HFDYVDIQSY…SKESDSTLKE (215 aa). The active site involves Glu312. The interval 458-483 is disordered; sequence QQIQNNEEQPSVPQEISKESDSTLKE. Positions 473–483 are enriched in basic and acidic residues; the sequence is ISKESDSTLKE.

The protein in the N-terminal section; belongs to the bacterial solute-binding protein 3 family. It in the C-terminal section; belongs to the transglycosylase Slt family.

The protein resides in the cell outer membrane. It catalyses the reaction Exolytic cleavage of the (1-&gt;4)-beta-glycosidic linkage between N-acetylmuramic acid (MurNAc) and N-acetylglucosamine (GlcNAc) residues in peptidoglycan, from either the reducing or the non-reducing ends of the peptidoglycan chains, with concomitant formation of a 1,6-anhydrobond in the MurNAc residue.. Its function is as follows. Murein-degrading enzyme that degrades murein glycan strands and insoluble, high-molecular weight murein sacculi, with the concomitant formation of a 1,6-anhydromuramoyl product. Lytic transglycosylases (LTs) play an integral role in the metabolism of the peptidoglycan (PG) sacculus. Their lytic action creates space within the PG sacculus to allow for its expansion as well as for the insertion of various structures such as secretion systems and flagella. This Actinobacillus pleuropneumoniae serotype 3 (strain JL03) protein is Membrane-bound lytic murein transglycosylase F.